The sequence spans 223 residues: Deoxyribose-phosphate aldolase (223 aa).

Asp-92 functions as the Proton donor/acceptor in the catalytic mechanism. Catalysis depends on Lys-158, which acts as the Schiff-base intermediate with acetaldehyde. Lys-188 serves as the catalytic Proton donor/acceptor.

This sequence belongs to the DeoC/FbaB aldolase family. DeoC type 1 subfamily.

The protein localises to the cytoplasm. The enzyme catalyses 2-deoxy-D-ribose 5-phosphate = D-glyceraldehyde 3-phosphate + acetaldehyde. Its pathway is carbohydrate degradation; 2-deoxy-D-ribose 1-phosphate degradation; D-glyceraldehyde 3-phosphate and acetaldehyde from 2-deoxy-alpha-D-ribose 1-phosphate: step 2/2. Catalyzes a reversible aldol reaction between acetaldehyde and D-glyceraldehyde 3-phosphate to generate 2-deoxy-D-ribose 5-phosphate. This chain is Deoxyribose-phosphate aldolase, found in Mycobacterium avium (strain 104).